Here is a 216-residue protein sequence, read N- to C-terminus: Adenylate kinase (216 aa).

Residue 10-15 (GAGKGT) coordinates ATP. Residues 30-59 (STGDIFRAHMSQGTPLGKLAKEYVDAGKYV) are NMP. AMP contacts are provided by residues Thr31, Arg36, 57 to 59 (KYV), 85 to 88 (GYPR), and Gln92. Residues 126 to 163 (GRRVCRSCGATYHVRFNPPREAGRCDRCGGELYQRSDD) form an LID region. Arg127 serves as a coordination point for ATP. 2 residues coordinate Zn(2+): Cys130 and Cys133. Residue 136–137 (TY) coordinates ATP. Residues Cys150 and Cys153 each contribute to the Zn(2+) site. AMP contacts are provided by Arg160 and Arg171. Gln199 is an ATP binding site.

The protein belongs to the adenylate kinase family. In terms of assembly, monomer.

It is found in the cytoplasm. The catalysed reaction is AMP + ATP = 2 ADP. It participates in purine metabolism; AMP biosynthesis via salvage pathway; AMP from ADP: step 1/1. In terms of biological role, catalyzes the reversible transfer of the terminal phosphate group between ATP and AMP. Plays an important role in cellular energy homeostasis and in adenine nucleotide metabolism. The polypeptide is Adenylate kinase (Symbiobacterium thermophilum (strain DSM 24528 / JCM 14929 / IAM 14863 / T)).